Here is a 246-residue protein sequence, read N- to C-terminus: Sortase B (246 aa).

A helical membrane pass occupies residues 5 to 24 (SFLGKSLTLVVLGVFLFSGW).

This sequence belongs to the bacterial sortase family. Class B subfamily.

It is found in the cell membrane. Its function is as follows. Transpeptidase that anchors surface proteins to the cell wall. Recognizes and modifies its substrate by proteolytic cleavage of a C-terminal sorting signal. Following cleavage, a covalent intermediate is formed via a thioester bond between the sortase and its substrate, which is then transferred and covalently attached to the cell wall. Catalyzes a cell wall sorting reaction in which a surface protein with the consensus sorting signal NP(Q/K)(T/S)(N/G/S)(D/A) is cleaved between the fourth and fifth residues, and the fourth position is linked to the cell wall. This is not the major sortase in Listeria, it seems to anchor only 2 proteins, Hbp2 (SvpA) and Hbp1. This Listeria monocytogenes serovar 1/2a (strain ATCC BAA-679 / EGD-e) protein is Sortase B.